The chain runs to 377 residues: MRRLNRKKTLSLVKELDAFPKVPESYVETSASGGTVSLIAFTTMALLTIMEFSVYQDTWMKYEYEVDKDFSSKLRINIDITVAMKCQYVGADVLDLAETMVASADGLVYEPTVFDLSPQQKEWQRMLQLIQSRLQEEHSLQDVIFKSAFKSTSTALPPREDDSSQSPNACRIHGHLYVNKVAGNFHITVGKAIPHPRGHAHLAALVNHESYNFSHRIDHLSFGELVPAIINPLDGTEKIAIDHNQMFQYFITVVPTKLHTYKISADTHQFSVTERERIINHAAGSHGVSGIFMKYDLSSLMVTVTEEHMPFWQFFVRLCGIVGGIFSTTGMLHGIGKFIVEIICCRFRLGSYKPVNSVPFEDGHTDNHLPLLENNTH.

Topologically, residues Met1–Gly33 are cytoplasmic. A helical membrane pass occupies residues Gly34–Val54. Residues Tyr55–Cys319 are Lumenal-facing. A helical transmembrane segment spans residues Gly320–Val340. At Glu341 to His377 the chain is on the cytoplasmic side.

This sequence belongs to the ERGIC family. May form a heteromeric complex composed of ERGIC1, ERGIC2 and ERGIC3. Interacts with ERGIC3, the interaction is required for the stable expression of both proteins. May interact with EEF1A1. As to expression, ubiquitously expressed.

It localises to the endoplasmic reticulum-Golgi intermediate compartment membrane. Its subcellular location is the golgi apparatus. The protein localises to the cis-Golgi network membrane. The protein resides in the endoplasmic reticulum membrane. It is found in the cytoplasm. It localises to the nucleus. Functionally, possible role in transport between endoplasmic reticulum and Golgi. This chain is Endoplasmic reticulum-Golgi intermediate compartment protein 2 (ERGIC2), found in Homo sapiens (Human).